The chain runs to 518 residues: Putative beta-xylosidase (518 aa).

D47 (proton acceptor) is an active-site residue. E203 functions as the Proton donor in the catalytic mechanism.

The protein belongs to the glycosyl hydrolase 43 family.

The enzyme catalyses Hydrolysis of (1-&gt;4)-beta-D-xylans, to remove successive D-xylose residues from the non-reducing termini.. The chain is Putative beta-xylosidase from Xylanibacter ruminicola (Prevotella ruminicola).